Here is a 106-residue protein sequence, read N- to C-terminus: Isocitrate dehydrogenase [NAD] subunit gamma, mitochondrial (106 aa).

The protein belongs to the isocitrate and isopropylmalate dehydrogenases family. In terms of assembly, heterooligomer of subunits alpha (IDH3A), beta (IDH3B), and gamma (IDH3G) in the apparent ratio of 2:1:1. The heterodimer containing one IDH3A and one IDH3B subunit and the heterodimer containing one IDH3A and one IDH3G subunit assemble into a heterotetramer (which contains two subunits of IDH3A, one of IDH3B and one of IDH3G) and further into the heterooctamer.

It localises to the mitochondrion. With respect to regulation, the heterotetramer and the heterodimer composed of IDH3A and IDH3G subunits can be allosterically activated by citrate (CIT) or/and ADP, and the two activators can act independently or synergistically. The heterodimer composed of IDH3A and IDH3B subunits cannot be allosterically regulated and the allosteric regulation of the heterotetramer is through the IDH3G subunit and not the IDH3B subunit. The IDH3G subunit contains the allosteric site which consists of a CIT-binding site and an ADP-binding site, and the binding of CIT and ADP causes conformational changes at the allosteric site which are transmitted to the active site in the catalytic subunit (IDH3A) through a cascade of conformational changes at the heterodimer interface, leading to stabilization of the isocitrate-binding at the active site and thus activation of the enzyme. ATP can activate the heterotetramer and the heterodimer composed of IDH3A and IDH3G subunits at low concentrations but inhibits their activities at high concentrations, whereas ATP exhibits only inhibitory effect on the heterodimer composed of IDH3A and IDH3B subunits. Functionally, regulatory subunit which plays a role in the allosteric regulation of the enzyme catalyzing the decarboxylation of isocitrate (ICT) into alpha-ketoglutarate. The heterodimer composed of the alpha (IDH3A) and beta (IDH3B) subunits and the heterodimer composed of the alpha (IDH3A) and gamma (IDH3G) subunits, have considerable basal activity but the full activity of the heterotetramer (containing two subunits of IDH3A, one of IDH3B and one of IDH3G) requires the assembly and cooperative function of both heterodimers. The sequence is that of Isocitrate dehydrogenase [NAD] subunit gamma, mitochondrial (IDH3G) from Sus scrofa (Pig).